Reading from the N-terminus, the 613-residue chain is Putative adenosylhomocysteinase 3 (613 aa).

2 stretches are compositionally biased toward low complexity: residues 1 to 14 (MSVQ…AAKV) and 35 to 44 (AAAVGAMVPP). A disordered region spans residues 1 to 186 (MSVQVVSAAA…KQQKNSKGSS (186 aa)). Ser2 bears the N-acetylserine mark. The segment at 2 to 111 (SVQVVSAAAA…DGGEALVSPD (110 aa)) is LISN domain, inhibits interaction with ITPR1. Residues 52–68 (APAPAPAAERPPAPGPG) show a composition bias toward pro residues. Positions 70–80 (GPTAALSPAAG) are enriched in low complexity. Phosphoserine is present on Ser109. Residues 137 to 146 (RPTKIGRRSL) show a composition bias toward basic residues. Residues 147-166 (SRSISQSSTDSYSSAASYTD) show a composition bias toward low complexity. Ser151, Ser154, Ser157, and Ser160 each carry phosphoserine. Substrate contacts are provided by Thr238, Asp312, and Glu337. Residue 338–340 (SVT) participates in NAD(+) binding. Positions 367 and 371 each coordinate substrate. NAD(+) contacts are provided by residues Asn372, 403–408 (GEVGKG), Glu424, Asn459, 480–482 (MGH), and Asn527.

The protein belongs to the adenosylhomocysteinase family. As to quaternary structure, homotetramer. Forms heteromultimers with AHCYL1 (via the C-terminal region). Interacts with ITPR1; with lower affinity than AHCYL1 and maybe via ITPR1. Interacts with SLC4A4. Interacts with ZCCHC4. Requires NAD(+) as cofactor. Post-translationally, phosphorylated during neuronal differentiation at the LISN domain. In terms of tissue distribution, highly expressed in cerebrum, cerebellum and kidney. Also expressed in thymus, spleen, testis, ovary and, at lower, levels in lung and liver (at protein level). In cerebellum, expressed in interneurons.

It is found in the cytoplasm. Its subcellular location is the microsome. It catalyses the reaction S-adenosyl-L-homocysteine + H2O = L-homocysteine + adenosine. It functions in the pathway amino-acid biosynthesis; L-homocysteine biosynthesis; L-homocysteine from S-adenosyl-L-homocysteine: step 1/1. In terms of biological role, may regulate the electrogenic sodium/bicarbonate cotransporter SLC4A4 activity and Mg(2+)-sensitivity. On the contrary of its homolog AHCYL1, does not regulate ITPR1 sensitivity to inositol 1,4,5-trisphosphate. The sequence is that of Putative adenosylhomocysteinase 3 (Ahcyl2) from Mus musculus (Mouse).